Reading from the N-terminus, the 428-residue chain is D-amino acid dehydrogenase (428 aa).

V3–Y17 serves as a coordination point for FAD.

The protein belongs to the DadA oxidoreductase family. FAD is required as a cofactor.

The catalysed reaction is a D-alpha-amino acid + A + H2O = a 2-oxocarboxylate + AH2 + NH4(+). It functions in the pathway amino-acid degradation; D-alanine degradation; NH(3) and pyruvate from D-alanine: step 1/1. Oxidative deamination of D-amino acids. This is D-amino acid dehydrogenase from Burkholderia ambifaria (strain MC40-6).